Reading from the N-terminus, the 618-residue chain is Sulfite reductase [NADPH] flavoprotein alpha-component (618 aa).

The Flavodoxin-like domain occupies 64–202; the sequence is VTLISASQTG…QAQQWRQQVV (139 aa). Residues 70–75, 117–120, and 153–162 each bind FMN; these read SQTGNA, STQG, and LGDTSYEHFC. Positions 253–467 constitute an FAD-binding FR-type domain; it reads TAPLTAQLSV…IEHNDNFRLP (215 aa). Residues threonine 341, lysine 375, 405 to 408, 423 to 425, tyrosine 429, and 438 to 441 contribute to the FAD site; these read RLYS, TVG, and GGAS. Residues 538 to 539, 544 to 548, and aspartate 580 each bind NADP(+); these read SR and KIYVQ. Residue tyrosine 618 coordinates FAD.

The protein belongs to the NADPH-dependent sulphite reductase flavoprotein subunit CysJ family. In the N-terminal section; belongs to the flavodoxin family. It in the C-terminal section; belongs to the flavoprotein pyridine nucleotide cytochrome reductase family. In terms of assembly, alpha(8)-beta(8). The alpha component is a flavoprotein, the beta component is a hemoprotein. It depends on FAD as a cofactor. FMN serves as cofactor.

It catalyses the reaction hydrogen sulfide + 3 NADP(+) + 3 H2O = sulfite + 3 NADPH + 4 H(+). The protein operates within sulfur metabolism; hydrogen sulfide biosynthesis; hydrogen sulfide from sulfite (NADPH route): step 1/1. In terms of biological role, component of the sulfite reductase complex that catalyzes the 6-electron reduction of sulfite to sulfide. This is one of several activities required for the biosynthesis of L-cysteine from sulfate. The flavoprotein component catalyzes the electron flow from NADPH -&gt; FAD -&gt; FMN to the hemoprotein component. This is Sulfite reductase [NADPH] flavoprotein alpha-component from Yersinia pseudotuberculosis serotype I (strain IP32953).